The primary structure comprises 164 residues: Cyclic pyranopterin monophosphate synthase (164 aa).

Residues 75 to 77 and 116 to 117 contribute to the substrate site; these read MCH and ME. Residue Asp131 is part of the active site.

It belongs to the MoaC family. Homohexamer; trimer of dimers.

The enzyme catalyses (8S)-3',8-cyclo-7,8-dihydroguanosine 5'-triphosphate = cyclic pyranopterin phosphate + diphosphate. Its pathway is cofactor biosynthesis; molybdopterin biosynthesis. Functionally, catalyzes the conversion of (8S)-3',8-cyclo-7,8-dihydroguanosine 5'-triphosphate to cyclic pyranopterin monophosphate (cPMP). The chain is Cyclic pyranopterin monophosphate synthase from Staphylococcus aureus (strain MRSA252).